The primary structure comprises 268 residues: Phosphatidylglycerol--prolipoprotein diacylglyceryl transferase (268 aa).

Helical transmembrane passes span 23–43, 58–78, 96–116, and 119–139; these read WYAL…LALA, FLTW…VLFY, GGMS…LFCW, and GLSP…GLFF. Residue Arg141 participates in a 1,2-diacyl-sn-glycero-3-phospho-(1'-sn-glycerol) binding. A run of 3 helical transmembrane segments spans residues 181–201, 206–226, and 238–258; these read SFLE…MPAV, GMTA…AEFF, and AGAT…VWLV.

It belongs to the Lgt family.

The protein localises to the cell inner membrane. It catalyses the reaction L-cysteinyl-[prolipoprotein] + a 1,2-diacyl-sn-glycero-3-phospho-(1'-sn-glycerol) = an S-1,2-diacyl-sn-glyceryl-L-cysteinyl-[prolipoprotein] + sn-glycerol 1-phosphate + H(+). It functions in the pathway protein modification; lipoprotein biosynthesis (diacylglyceryl transfer). Functionally, catalyzes the transfer of the diacylglyceryl group from phosphatidylglycerol to the sulfhydryl group of the N-terminal cysteine of a prolipoprotein, the first step in the formation of mature lipoproteins. The chain is Phosphatidylglycerol--prolipoprotein diacylglyceryl transferase from Azospirillum brasilense.